Reading from the N-terminus, the 273-residue chain is Transmembrane protein 45A (273 aa).

The next 5 membrane-spanning stretches (helical) occupy residues 8–27, 55–79, 108–131, 153–171, and 217–236; these read ALPG…KNIL, VVVL…ALIL, IICF…AIFV, LLVF…EFLV, and MFLS…LIGV.

This sequence belongs to the TMEM45 family.

The protein resides in the membrane. This Mus musculus (Mouse) protein is Transmembrane protein 45A (Tmem45a).